The primary structure comprises 118 residues: Beta-2-microglobulin (118 aa).

An N-terminal signal peptide occupies residues 1-21 (MESRWGIVVIGLLCCVSWVEA). In terms of domain architecture, Ig-like C1-type spans 26–113 (PKIQVYTRSP…THNSVTKSVK (88 aa)). Residues cysteine 46 and cysteine 101 are joined by a disulfide bond.

The protein belongs to the beta-2-microglobulin family. As to quaternary structure, heterodimer of an alpha chain and a beta chain. Beta-2-microglobulin is the beta-chain of major histocompatibility complex class I molecules.

It localises to the secreted. In terms of biological role, component of the class I major histocompatibility complex (MHC). Involved in the presentation of peptide antigens to the immune system. This is Beta-2-microglobulin (B2M) from Tachyglossus aculeatus aculeatus (Southeast Australian short-beaked echidna).